The chain runs to 544 residues: Probable protein kinase UbiB (544 aa).

The Protein kinase domain occupies 123–504 (DFDENALASA…QRWQKKMFVL (382 aa)). ATP is bound by residues 129–137 (LASASIAQV) and Lys155. Asp290 functions as the Proton acceptor in the catalytic mechanism. Helical transmembrane passes span 501–521 (MFVL…FAAL) and 523–543 (LAIS…GFLL).

It belongs to the ABC1 family. UbiB subfamily.

The protein localises to the cell inner membrane. It participates in cofactor biosynthesis; ubiquinone biosynthesis [regulation]. Functionally, is probably a protein kinase regulator of UbiI activity which is involved in aerobic coenzyme Q (ubiquinone) biosynthesis. The polypeptide is Probable protein kinase UbiB (Histophilus somni (strain 129Pt) (Haemophilus somnus)).